The primary structure comprises 181 residues: ADP-ribosylation factor 1 (181 aa).

Gly-2 is modified (N-acetylglycine; alternate). Gly-2 is lipidated: N-myristoyl glycine; alternate. Residues 3–16 (NIFANLFKGLFGKK) form an important for the stable binding to the membranes region. GTP-binding positions include 24 to 32 (GLDAAGKTT), 126 to 129 (NKQD), and Ala-160.

Belongs to the small GTPase superfamily. Arf family. As to quaternary structure, interacts (when activated) with GGA1, GGA2 and GGA3; the interaction is required for proper subcellular location of GGA1, GGA2 and GGA3. Interacts with ARHGAP21, ASAP2, GGA1, HERC1, PRKCABP, PIP5K1B, TMED2, PSCD2, TMED10 and GRIA2. Interacts with ARFGAP1, which hydrolyzes GTP and thus, regulates its function. Interacts with PI4KB in the Golgi complex. Interacts with NCS1/FREQ in the Golgi and at the plasma membrane. Interacts with PLEKHA3. Interacts with PLEKHA8; the interaction, together with phosphatidylinositol 4-phosphate binding, is required for FAPP2-mediated glucosylceramide transfer activity. Interacts (activated) with PICK1 (via PDZ domain); the interaction blocks Arp2/3 complex inhibition. Interacts with IQSEC1. Interacts with C9orf72.

The protein localises to the golgi apparatus membrane. The protein resides in the synapse. Its subcellular location is the synaptosome. It localises to the postsynaptic density. The enzyme catalyses GTP + H2O = GDP + phosphate + H(+). With respect to regulation, alternates between an inactive GDP-bound form and an active GTP-bound form. Activated by guanine nucleotide-exchange factors (GEFs) and inactivated by GTPase-activating proteins (GAPs). Its function is as follows. Small GTPase involved in protein trafficking between different compartments. Modulates vesicle budding and uncoating within the Golgi complex. In its GTP-bound form, triggers the recruitment of coatomer proteins to the Golgi membrane. The hydrolysis of ARF1-bound GTP, which is mediated by ARFGAPs proteins, is required for dissociation of coat proteins from Golgi membranes and vesicles. The GTP-bound form interacts with PICK1 to limit PICK1-mediated inhibition of Arp2/3 complex activity; the function is linked to AMPA receptor (AMPAR) trafficking, regulation of synaptic plasticity of excitatory synapses and spine shrinkage during long-term depression (LTD). Plays a key role in the regulation of intestinal stem cells and gut microbiota, and is essential for maintaining intestinal homeostasis. Also plays a critical role in mast cell expansion but not in mast cell maturation by facilitating optimal mTORC1 activation. This Bos taurus (Bovine) protein is ADP-ribosylation factor 1 (ARF1).